A 291-amino-acid polypeptide reads, in one-letter code: Light-independent protochlorophyllide reductase iron-sulfur ATP-binding protein (291 aa).

Residues 10-15 and lysine 39 contribute to the ATP site; that span reads GIGKST. Residue serine 14 participates in Mg(2+) binding. 2 residues coordinate [4Fe-4S] cluster: cysteine 95 and cysteine 129. 180-181 serves as a coordination point for ATP; that stretch reads NR.

The protein belongs to the NifH/BchL/ChlL family. As to quaternary structure, homodimer. Protochlorophyllide reductase is composed of three subunits; ChlL, ChlN and ChlB. It depends on [4Fe-4S] cluster as a cofactor.

It localises to the plastid. The protein resides in the chloroplast. It catalyses the reaction chlorophyllide a + oxidized 2[4Fe-4S]-[ferredoxin] + 2 ADP + 2 phosphate = protochlorophyllide a + reduced 2[4Fe-4S]-[ferredoxin] + 2 ATP + 2 H2O. It participates in porphyrin-containing compound metabolism; chlorophyll biosynthesis (light-independent). Component of the dark-operative protochlorophyllide reductase (DPOR) that uses Mg-ATP and reduced ferredoxin to reduce ring D of protochlorophyllide (Pchlide) to form chlorophyllide a (Chlide). This reaction is light-independent. The L component serves as a unique electron donor to the NB-component of the complex, and binds Mg-ATP. The chain is Light-independent protochlorophyllide reductase iron-sulfur ATP-binding protein from Pinus thunbergii (Japanese black pine).